The primary structure comprises 847 residues: Alpha-glucuronidase (847 aa).

An N-terminal signal peptide occupies residues Met-1–Ala-19. N-linked (GlcNAc...) asparagine glycans are attached at residues Asn-52, Asn-238, Asn-321, Asn-353, Asn-586, Asn-692, Asn-740, and Asn-767.

This sequence belongs to the glycosyl hydrolase 67 family.

Its subcellular location is the secreted. The enzyme catalyses an alpha-D-glucuronoside + H2O = D-glucuronate + an alcohol. Releases 4-O-methylglucuronic acid from xylan. The protein is Alpha-glucuronidase of Hypocrea jecorina (Trichoderma reesei).